The chain runs to 810 residues: Volume-regulated anion channel subunit LRRC8A (810 aa).

M1 carries the post-translational modification N-acetylmethionine. Over 1–22 the chain is Cytoplasmic; that stretch reads MIPVTELRYFADTQPAYRILKP. Residues 23-47 form a helical membrane-spanning segment; sequence WWDVFTDYISIVMLMIAVFGGTLQV. The Extracellular portion of the chain corresponds to 48 to 123; sequence TQDKMICLPC…YENRLHWFAK (76 aa). 3 disulfide bridges follow: C54–C310, C57–C65, and C113–C295. N-linked (GlcNAc...) asparagine glycans are attached at residues N66 and N83. A helical membrane pass occupies residues 124–142; the sequence is YFPYLVLLHTLIFLACSNF. Topologically, residues 143–264 are cytoplasmic; sequence WFKFPRTSSK…EEGDIVYRLY (122 aa). At T200 the chain carries Phosphothreonine. S202 bears the Phosphoserine mark. Phosphothreonine is present on T215. The residue at position 217 (S217) is a Phosphoserine. The chain crosses the membrane as a helical span at residues 265–286; that stretch reads MRQTIIKVIKFFLIICYTVYYV. Residues 287–316 lie on the Extracellular side of the membrane; the sequence is HNIKFDVDCTVDIESLTGYRTYRCAHPLAT. A helical transmembrane segment spans residues 317–341; it reads LFKILASFYISLVIFYGLICMYTLW. Over 342 to 810 the chain is Cytoplasmic; it reads WMLRRSLKKY…RLWRADKEQA (469 aa). 17 LRR repeats span residues 399–422, 423–445, 447–468, 469–492, 493–515, 518–542, 543–565, 567–589, 590–613, 614–637, 639–661, 662–684, 686–707, 708–730, 732–753, 754–776, and 778–801; these read ENKLRQLNLNNEWTLDKLRQRLTK, NAQDKLELHLFMLSGIPDTVFDL, ELEVLKLELIPDVTIPPSIAQL, TGLKELWLYHTAAKIEAPALAFLR, ENLRALHIKFTDIKEIPLWIYSL, LEELHLTGNLSAENNRYIVIDGLRE, LKRLKVLRLKSNLSKLPQVVTDV, VHLQKLSINNEGTKLIVLNSLKK, MVNLTELELIRCDLERIPHSIFSL, HNLQEIDLKDNNLKTIEEIISFQH, HRLTCLKLWYNHIAYIPIQIGNL, TNLERLYLNRNKIEKIPTQLFYC, KLRYLDLSHNNLTLLPADIGLL, QNLQNLAVTANRIEALPPELFQC, KLRALHLGNNVLQSLPSRVGEL, TNLTQIELRGNRLECLPVELGEC, and LLKRSGLVVEEDLFSTLPPEVKER. The Di-leucine motif signature appears at 706–707; that stretch reads LL.

This sequence belongs to the LRRC8 family. Heterohexamer; oligomerizes with other LRRC8 proteins (LRRC8B, LRRC8C, LRRC8D and/or LRRC8E) to form a heterohexamer. Can form homohexamers in vitro, but these have lower conductance than heterohexamers. Detected in a channel complex that contains LRRC8A, LRRC8C and LRRC8E. In vivo, the subunit composition may depend primarily on expression levels, and heterooligomeric channels containing various proportions of the different LRRC8 proteins may coexist. Interact with GRB2. Interacts with NOX4; this interaction prevents the ubiquitin-mediated degradation of LRRC8A. N-glycosylated.

The protein localises to the cell membrane. It is found in the lysosome membrane. It catalyses the reaction chloride(in) = chloride(out). The enzyme catalyses iodide(out) = iodide(in). The catalysed reaction is taurine(out) = taurine(in). It carries out the reaction L-aspartate(out) = L-aspartate(in). It catalyses the reaction L-glutamate(out) = L-glutamate(in). The enzyme catalyses myo-inositol(out) = myo-inositol(in). The catalysed reaction is 2',3'-cGAMP(out) = 2',3'-cGAMP(in). With respect to regulation, inhibited by (4-[(2-butyl-6,7-dichloro-2-cyclopentyl-2,3-dihydro-1-oxo-1H-inden-5-yl)oxy]butanoic acid), which plugs the channel like a cork in a bottle by binding in the extracellular selectivity filter and sterically occluding ion conduction. Lipids may block conduction in closed heterohexameric channels. Essential component of the volume-regulated anion channel (VRAC, also named VSOAC channel), an anion channel required to maintain a constant cell volume in response to extracellular or intracellular osmotic changes. The VRAC channel conducts iodide better than chloride and can also conduct organic osmolytes like taurine. Mediates efflux of amino acids, such as aspartate and glutamate, in response to osmotic stress. In complex with LRRC8C or LRRC8E, acts as a transporter of immunoreactive cyclic dinucleotide GMP-AMP (2'-3'-cGAMP), an immune messenger produced in response to DNA virus in the cytosol: mediates both import and export of 2'-3'-cGAMP, thereby promoting transfer of 2'-3'-cGAMP to bystander cells. In contrast, complexes containing LRRC8D inhibit transport of 2'-3'-cGAMP. Required for in vivo channel activity, together with at least one other family member (LRRC8B, LRRC8C, LRRC8D or LRRC8E); channel characteristics depend on the precise subunit composition. Can form functional channels by itself (in vitro). Involved in B-cell development: required for the pro-B cell to pre-B cell transition. Also required for T-cell development. Required for myoblast differentiation: VRAC activity promotes membrane hyperpolarization and regulates insulin-stimulated glucose metabolism and oxygen consumption. Also acts as a regulator of glucose-sensing in pancreatic beta cells: VRAC currents, generated in response to hypotonicity- or glucose-induced beta cell swelling, depolarize cells, thereby causing electrical excitation, leading to increase glucose sensitivity and insulin secretion. Also plays a role in lysosome homeostasis by forming functional lysosomal VRAC channels in response to low cytoplasmic ionic strength condition: lysosomal VRAC channels are necessary for the formation of large lysosome-derived vacuoles, which store and then expel excess water to maintain cytosolic water homeostasis. Acts as a key factor in NLRP3 inflammasome activation by modulating itaconate efflux and mitochondria function. The protein is Volume-regulated anion channel subunit LRRC8A of Rattus norvegicus (Rat).